A 233-amino-acid polypeptide reads, in one-letter code: tRNA (guanine-N(7)-)-methyltransferase (233 aa).

The interval 1–22 (MIDENHPMRAAGNFFGRRHGKP) is disordered. Positions 64, 89, 116, and 138 each coordinate S-adenosyl-L-methionine. Residue Asp-138 is part of the active site. Substrate-binding positions include Lys-142, Asp-174, and 212 to 215 (TRYE).

It belongs to the class I-like SAM-binding methyltransferase superfamily. TrmB family.

The enzyme catalyses guanosine(46) in tRNA + S-adenosyl-L-methionine = N(7)-methylguanosine(46) in tRNA + S-adenosyl-L-homocysteine. The protein operates within tRNA modification; N(7)-methylguanine-tRNA biosynthesis. Catalyzes the formation of N(7)-methylguanine at position 46 (m7G46) in tRNA. The sequence is that of tRNA (guanine-N(7)-)-methyltransferase from Brucella abortus (strain 2308).